A 407-amino-acid chain; its full sequence is Serine/threonine transporter SstT (407 aa).

The next 9 helical transmembrane spans lie at 10 to 30, 42 to 62, 81 to 101, 141 to 161, 179 to 199, 218 to 238, 245 to 267, 288 to 308, and 316 to 336; these read AKGNLIIQICAGIALGILIGI, LGILFTSALKAIAPMLVFILI, IIILYIVGTFLASACAILANF, ALSSGNYLGILTWAIAGGAAL, VLKIVKFVVKLAPFGIFGLVA, ILLVATMLFVTFVINALIVFF, FPLIFICLRHSAFFAFFTRSSAA, ISIPLGATINMAGAAVTIAIL, and VGIEISLLQAFLLSIIATFAA.

Belongs to the dicarboxylate/amino acid:cation symporter (DAACS) (TC 2.A.23) family.

Its subcellular location is the cell inner membrane. It carries out the reaction L-serine(in) + Na(+)(in) = L-serine(out) + Na(+)(out). The catalysed reaction is L-threonine(in) + Na(+)(in) = L-threonine(out) + Na(+)(out). Involved in the import of serine and threonine into the cell, with the concomitant import of sodium (symport system). The chain is Serine/threonine transporter SstT from Campylobacter jejuni subsp. doylei (strain ATCC BAA-1458 / RM4099 / 269.97).